A 309-amino-acid chain; its full sequence is Tumor necrosis factor ligand superfamily member 13B (309 aa).

Residues Met1–Arg47 lie on the Cytoplasmic side of the membrane. A helical; Signal-anchor for type II membrane protein transmembrane segment spans residues Leu48–Tyr68. Residues Gln69–Leu309 are Extracellular-facing. The disordered stretch occupies residues Pro110–Leu140. N-linked (GlcNAc...) asparagine glycans are attached at residues Asn117 and Asn266. A compositionally biased stretch (basic residues) spans Asn117–Arg126. Positions Asp169–Leu308 constitute a THD domain. A disulfide bond links Cys256 and Cys269.

The protein belongs to the tumor necrosis factor family. In terms of assembly, homotrimer. Isoform 2 heteromultimerizes with isoform 1, probably limiting the amount of functional isoform 1 on the cell surface. The soluble form derives from the membrane form by proteolytic processing. In terms of processing, isoform 2 is not efficiently shed from the membrane unlike isoform 1. Isoform 2 is expressed in many myeloid cell lines.

Its subcellular location is the cell membrane. The protein localises to the secreted. In terms of biological role, cytokine that binds to TNFRSF13B/TACI and TNFRSF17/BCMA. TNFSF13/APRIL binds to the same 2 receptors. Together, they form a 2 ligands -2 receptors pathway involved in the stimulation of B- and T-cell function and the regulation of humoral immunity. A third B-cell specific BAFF-receptor (BAFFR/BR3) promotes the survival of mature B-cells and the B-cell response. Functionally, isoform 2 seems to inhibit isoform 1 secretion and bioactivity. This chain is Tumor necrosis factor ligand superfamily member 13B (Tnfsf13b), found in Mus musculus (Mouse).